Consider the following 129-residue polypeptide: Glycine cleavage system H protein (129 aa).

Residues 24–106 (SYTVGITEHA…YGEGWFFRVM (83 aa)) enclose the Lipoyl-binding domain. Position 65 is an N6-lipoyllysine (lysine 65).

This sequence belongs to the GcvH family. As to quaternary structure, the glycine cleavage system is composed of four proteins: P, T, L and H. Requires (R)-lipoate as cofactor.

The glycine cleavage system catalyzes the degradation of glycine. The H protein shuttles the methylamine group of glycine from the P protein to the T protein. The sequence is that of Glycine cleavage system H protein from Shewanella oneidensis (strain ATCC 700550 / JCM 31522 / CIP 106686 / LMG 19005 / NCIMB 14063 / MR-1).